We begin with the raw amino-acid sequence, 200 residues long: uncharacterized protein (200 aa).

This is an uncharacterized protein from Amazona oratrix (yellow-headed parrot).